Consider the following 366-residue polypeptide: Ferrochelatase (366 aa).

Fe cation is bound by residues His210 and Glu293.

This sequence belongs to the ferrochelatase family.

It localises to the cytoplasm. It carries out the reaction heme b + 2 H(+) = protoporphyrin IX + Fe(2+). Its pathway is porphyrin-containing compound metabolism; protoheme biosynthesis; protoheme from protoporphyrin-IX: step 1/1. Catalyzes the ferrous insertion into protoporphyrin IX. The protein is Ferrochelatase of Leptospira borgpetersenii serovar Hardjo-bovis (strain JB197).